The chain runs to 292 residues: CCR4-NOT transcription complex subunit 8 (292 aa).

A divalent metal cation-binding residues include Asp40, Glu42, Asp161, and Asp230.

This sequence belongs to the CAF1 family. Component of the CCR4-NOT complex; distinct complexes seem to exist that differ in the participation of probably mutually exclusive catalytic subunits; the complex contains two deadenylase subunits, CNOT6 or CNOT6L, and CNOT7 or CNOT8. In the complex interacts directly with CNOT1. Interacts with BTG1, BTG2 and TOB1. Interacts with BTG4.

It localises to the cytoplasm. The protein localises to the nucleus. The enzyme catalyses Exonucleolytic cleavage of poly(A) to 5'-AMP.. In terms of biological role, has 3'-5' poly(A) exoribonuclease activity for synthetic poly(A) RNA substrate. Its function seems to be partially redundant with that of CNOT7. Catalytic component of the CCR4-NOT complex which is linked to various cellular processes including bulk mRNA degradation, miRNA-mediated repression, translational repression during translational initiation and general transcription regulation. During miRNA-mediated repression the complex also seems to act as translational repressor during translational initiation. Additional complex functions may be a consequence of its influence on mRNA expression. Associates with members of the BTG family such as TOB1 and BTG2 and is required for their anti-proliferative activity. This is CCR4-NOT transcription complex subunit 8 (Cnot8) from Mus musculus (Mouse).